The primary structure comprises 719 residues: Polyribonucleotide nucleotidyltransferase (719 aa).

Mg(2+) contacts are provided by D487 and D493. One can recognise a KH domain in the interval 554-613 (PRIETFKIATDKIREVIGTGGKVIREIVEKTGAKVNIEDDGTVKVASSDGEAMKAAIKWI). The region spanning 623–691 (GQIYDGTVVK…DRGKTRLSMK (69 aa)) is the S1 motif domain. Residues 691–719 (KVVDQTTGEDLEAKQKDAPAEAPREAAGE) are disordered. Residues 701 to 719 (LEAKQKDAPAEAPREAAGE) show a composition bias toward basic and acidic residues.

The protein belongs to the polyribonucleotide nucleotidyltransferase family. Mg(2+) serves as cofactor.

The protein localises to the cytoplasm. It carries out the reaction RNA(n+1) + phosphate = RNA(n) + a ribonucleoside 5'-diphosphate. Its function is as follows. Involved in mRNA degradation. Catalyzes the phosphorolysis of single-stranded polyribonucleotides processively in the 3'- to 5'-direction. The protein is Polyribonucleotide nucleotidyltransferase of Bradyrhizobium sp. (strain ORS 278).